The primary structure comprises 161 residues: Ubiquitin-conjugating enzyme E2Q-like protein 1 (161 aa).

The region spanning 1 to 154 (MKELQDIARL…VKTHEKYGWV (154 aa)) is the UBC core domain. Catalysis depends on Cys-88, which acts as the Glycyl thioester intermediate.

It belongs to the ubiquitin-conjugating enzyme family. As to quaternary structure, interacts with FBXW7.

Its subcellular location is the nucleus. The catalysed reaction is S-ubiquitinyl-[E1 ubiquitin-activating enzyme]-L-cysteine + [E2 ubiquitin-conjugating enzyme]-L-cysteine = [E1 ubiquitin-activating enzyme]-L-cysteine + S-ubiquitinyl-[E2 ubiquitin-conjugating enzyme]-L-cysteine.. It participates in protein modification; protein ubiquitination. In terms of biological role, probable E2 ubiquitin-protein ligase that catalyzes the covalent attachment of ubiquitin to target proteins. May facilitate the monoubiquitination and degradation of MTOR and CCNE1 through interaction with FBXW7. This Homo sapiens (Human) protein is Ubiquitin-conjugating enzyme E2Q-like protein 1 (UBE2QL1).